Consider the following 555-residue polypeptide: MGQTASSPQDNKESKSHPQFKTRDEILQYFNTRVVKLFTVTEIAAFKKRFNAIDLNEPIDDTLIKEALYLDAQPNVWSAVSETIRLLQNFPLFHQPIADSITGFGLLKVIAIINVKRFEKLVNTTITRYDITVTLGLCGQAKESENKIKSTNLGDILKTYDHIEIESIHIPYDKLILLVAWLLTLVTGVATTNCKVELSDTIANWNNFKSSAISIANTISTSALGNANDIGIPATDILNAFNTIMISLVPYMSNLFEHLLFGVDDLIDHVNDLANLSHQDVLTPSLYAQVIIGLPNSITITKLQKLYVGKESGFSMRSLQSKVFRWKAPTLMIVSGTRISDDESYADSKNPRYRSFLYSFPKLRENDQNLDAIHLTKKKVTYAVYIDEPWKVSNKEKFGATNMTIMELTPQQKTYQSCMERTMYFNTIGGGIGVGSEQPIVKQNDIKFIPGNISLTMDSSLEFGVFRHVGAGGGFKTSLLDNDDSKSFEIRFIIQNVEVWGCGGEKELAEQLKQLEWEEAEAKRRQTINLQSLSEDKALLEMVGLVGQHQSGGSV.

A TLDc domain is found at 280-503 (DVLTPSLYAQ…IQNVEVWGCG (224 aa)).

Belongs to the RTC5 family.

It localises to the cytoplasm. In terms of biological role, may be involved in a process influencing telomere capping. The sequence is that of Restriction of telomere capping protein 5 (RTC5) from Candida glabrata (strain ATCC 2001 / BCRC 20586 / JCM 3761 / NBRC 0622 / NRRL Y-65 / CBS 138) (Yeast).